We begin with the raw amino-acid sequence, 178 residues long: PRA1 family protein 2 (178 aa).

The Cytoplasmic portion of the chain corresponds to 1 to 41 (MSEVRLPPLRALDDFVLGSARLAAPDPGDPQRWCHRVINNL). A helical membrane pass occupies residues 42–62 (LYYQTNYLLCFGISLALAGYI). The Extracellular portion of the chain corresponds to 63-64 (RP). Residues 65 to 85 (LHTLLSALVVVVALGVLVWAA) form a helical membrane-spanning segment. Over 86–96 (ETRAAVRRCRR) the chain is Cytoplasmic. A helical transmembrane segment spans residues 97–119 (SHPAACLAAVLAISLFILWAVGG). Topologically, residues 120–122 (AFT) are extracellular. A helical transmembrane segment spans residues 123-140 (FLLSITAPVFLILLHASL). Topologically, residues 141-178 (RLRNLKNKIENKIESIGLKRTPMGLLLEALGQEQEAGS) are cytoplasmic.

The protein belongs to the PRA1 family. In terms of assembly, interacts with CCR5 and GDE1.

The protein resides in the endosome membrane. May be involved in ER/Golgi transport and vesicular traffic. Plays a proapoptotic role in cerulenin-induced neuroblastoma apoptosis. In Mus musculus (Mouse), this protein is PRA1 family protein 2 (Praf2).